The chain runs to 114 residues: T cell receptor beta variable 5-1 (114 aa).

Positions Met-1 to Ala-21 are cleaved as a signal peptide. Positions Gly-22–Leu-114 constitute an Ig-like domain. The cysteines at positions 42 and 110 are disulfide-linked. An N-linked (GlcNAc...) asparagine glycan is attached at Asn-96.

Alpha-beta TR is a heterodimer composed of an alpha and beta chain; disulfide-linked. The alpha-beta TR is associated with the transmembrane signaling CD3 coreceptor proteins to form the TR-CD3 (TcR or TCR). The assembly of alpha-beta TR heterodimers with CD3 occurs in the endoplasmic reticulum where a single alpha-beta TR heterodimer associates with one CD3D-CD3E heterodimer, one CD3G-CD3E heterodimer and one CD247 homodimer forming a stable octameric structure. CD3D-CD3E and CD3G-CD3E heterodimers preferentially associate with TR alpha and TR beta chains, respectively. The association of the CD247 homodimer is the last step of TcR assembly in the endoplasmic reticulum and is required for transport to the cell surface.

Its subcellular location is the cell membrane. Functionally, v region of the variable domain of T cell receptor (TR) beta chain that participates in the antigen recognition. Alpha-beta T cell receptors are antigen specific receptors which are essential to the immune response and are present on the cell surface of T lymphocytes. Recognize peptide-major histocompatibility (MH) (pMH) complexes that are displayed by antigen presenting cells (APC), a prerequisite for efficient T cell adaptive immunity against pathogens. Binding of alpha-beta TR to pMH complex initiates TR-CD3 clustering on the cell surface and intracellular activation of LCK that phosphorylates the ITAM motifs of CD3G, CD3D, CD3E and CD247 enabling the recruitment of ZAP70. In turn ZAP70 phosphorylates LAT, which recruits numerous signaling molecules to form the LAT signalosome. The LAT signalosome propagates signal branching to three major signaling pathways, the calcium, the mitogen-activated protein kinase (MAPK) kinase and the nuclear factor NF-kappa-B (NF-kB) pathways, leading to the mobilization of transcription factors that are critical for gene expression and essential for T cell growth and differentiation. The T cell repertoire is generated in the thymus, by V-(D)-J rearrangement. This repertoire is then shaped by intrathymic selection events to generate a peripheral T cell pool of self-MH restricted, non-autoaggressive T cells. Post-thymic interaction of alpha-beta TR with the pMH complexes shapes TR structural and functional avidity. The chain is T cell receptor beta variable 5-1 from Homo sapiens (Human).